The sequence spans 120 residues: Histone H2B (120 aa).

The interval 1-26 (MAEPAKKKPKKLPKKDKGQKDIKRKK) is disordered. At Ala-2 the chain carries Blocked amino end (Ala). N6-acetyllysine occurs at positions 7, 10, and 11. A Glycyl lysine isopeptide (Lys-Gly) (interchain with G-Cter in ubiquitin) cross-link involves residue Lys-115.

This sequence belongs to the histone H2B family. In terms of assembly, the nucleosome is a histone octamer containing two molecules each of H2A, H2B, H3 and H4 assembled in one H3-H4 heterotetramer and two H2A-H2B heterodimers. The octamer wraps approximately 147 bp of DNA. In terms of processing, can be acetylated to form H2BK6ac, H2BK33ac and H2BK34ac. Post-translationally, monoubiquitinated to form H2BK143ub1; may give a specific tag for epigenetic transcriptional activation.

The protein resides in the nucleus. It is found in the chromosome. Functionally, core component of nucleosome. Nucleosomes wrap and compact DNA into chromatin, limiting DNA accessibility to the cellular machineries which require DNA as a template. Histones thereby play a central role in transcription regulation, DNA repair, DNA replication and chromosomal stability. DNA accessibility is regulated via a complex set of post-translational modifications of histones, also called histone code, and nucleosome remodeling. The protein is Histone H2B of Pisum sativum (Garden pea).